We begin with the raw amino-acid sequence, 173 residues long: NADH-ubiquinone oxidoreductase chain 6 (173 aa).

Transmembrane regions (helical) follow at residues 1–21 (MTYF…AVAS), 27–47 (YGVV…LSLG), 48–68 (VSFV…VVFV), 87–107 (VVGY…VGGF), and 139–159 (CGVG…FVVL).

It belongs to the complex I subunit 6 family.

It localises to the mitochondrion membrane. The catalysed reaction is a ubiquinone + NADH + 5 H(+)(in) = a ubiquinol + NAD(+) + 4 H(+)(out). Its function is as follows. Core subunit of the mitochondrial membrane respiratory chain NADH dehydrogenase (Complex I) that is believed to belong to the minimal assembly required for catalysis. Complex I functions in the transfer of electrons from NADH to the respiratory chain. The immediate electron acceptor for the enzyme is believed to be ubiquinone. In Aethia cristatella (Crested auklet), this protein is NADH-ubiquinone oxidoreductase chain 6 (MT-ND6).